The primary structure comprises 184 residues: uncharacterized protein (184 aa).

A Nudix hydrolase domain is found at 36-164 (LRHRATYIVV…TPDSLKALAL (129 aa)). The short motif at 73–95 (GGVVQADEQLLESARREAEEELG) is the Nudix box element. Mg(2+) contacts are provided by Glu-89 and Glu-93.

It belongs to the Nudix hydrolase family. Requires Mg(2+) as cofactor.

This is an uncharacterized protein from Salmonella typhi.